The sequence spans 396 residues: Protein PIN-LIKES 5 (396 aa).

Topologically, residues 1-5 (MGFWS) are lumenal. Residues 6-26 (LLEVASMPVIQVLFMSLVGAF) traverse the membrane as a helical segment. At 27–45 (MASDRCKLFPVEARNSMNK) the chain is on the cytoplasmic side. The helical transmembrane segment at 46–66 (VVFVLFAPALMFANLAQTVTL) threads the bilayer. Topologically, residues 67–73 (EDIISWW) are lumenal. A helical membrane pass occupies residues 74 to 94 (FMPVNMGLTFLIGGLLGWLVV). Over 95 to 106 (KILKPPPYLEGL) the chain is Cytoplasmic. A helical transmembrane segment spans residues 107–127 (IVATCSAGNMGNLPIILVPAI). The Lumenal portion of the chain corresponds to 128-144 (CDEDKSPFGNRSVCRTV). Residues 145–165 (GLSYASFSMALGGFYIWTYTF) form a helical membrane-spanning segment. Over 166–229 (RLIKGSAMKV…WRKGVDFLHE (64 aa)) the chain is Cytoplasmic. The chain crosses the membrane as a helical span at residues 230–250 (ILEELLAPPTLGAIIGFIFGA). The Lumenal segment spans residues 251-273 (VRWLRNLIIGDDAPLRIVQSTAK). The chain crosses the membrane as a helical span at residues 274 to 294 (LLGDGTIPCMTIILGGNLIQG). Topologically, residues 295-312 (LRSSAVKPMVVLGIVCVR) are cytoplasmic. Residues 313 to 333 (YIAMPIIGIGIVLTAANLGFL) form a helical membrane-spanning segment. Over 334-337 (PADP) the chain is Lumenal. Residues 338 to 358 (LFQYVLMLQFTLPPAMNIGTM) form a helical membrane-spanning segment. Residues 359–370 (TQLYNVAQDECS) lie on the Cytoplasmic side of the membrane. The chain crosses the membrane as a helical span at residues 371 to 391 (VLMLWTYLVAILALTVWSTIF). Over 392–396 (LHLLV) the chain is Lumenal.

It belongs to the auxin efflux carrier (TC 2.A.69.2) family. Expressed in seedlings, cauline leaves and flowers.

The protein localises to the endoplasmic reticulum membrane. Its function is as follows. Involved in cellular auxin homeostasis by regulating auxin metabolism. Regulates intracellular auxin accumulation at the endoplasmic reticulum and thus auxin availability for nuclear auxin signaling. In Arabidopsis thaliana (Mouse-ear cress), this protein is Protein PIN-LIKES 5.